A 261-amino-acid polypeptide reads, in one-letter code: 5-hmdU DNA kinase (261 aa).

The protein belongs to the thymidylate kinase family. 5-hmdU DNA kinase subfamily.

The enzyme catalyses 5-hydroxymethyl-dUMP in DNA + ATP = 5-phosphomethyl-dUMP in DNA + ADP + H(+). In terms of biological role, phosphorylates 5-hydroxymethyluracil (5hmdU) into 5-phosphomethyl-2'-deoxyuridine (5- PmdU) on DNA as a step in the pathway leading to thymidine hypermodifications in the viral genome. As a final result of the pathway of hypermodification, 5-Nalpha-putrescinylthymidine (Nalpha-PutT) substitutes for about 50% of thymidines in the viral DNA. These modifications probably prevent degradation of viral genome by the host restriction-modification antiviral defense system. This is 5-hmdU DNA kinase from Delftia phage PhiW-14 (Deftia acidovorans bacteriophage phiW-14).